The sequence spans 187 residues: MASTADFKNGLVLQIDGQLWSIVEFQHVKPGKGPAFVRTKLKNVLSGKVVDKTYNAGVKVETATVDRRDTTYLYRDGSDFVFMDSQDYEQHPLPESLVGDAARFLLEGMPVQVAFHDGAPLYIELPVTVEIVVTHTEPGLQGDRSSAGTKPATLETGAQINVPLFINTGDKLKVDSRDGGYLGRVNA.

It belongs to the elongation factor P family.

The protein localises to the cytoplasm. It participates in protein biosynthesis; polypeptide chain elongation. Functionally, involved in peptide bond synthesis. Stimulates efficient translation and peptide-bond synthesis on native or reconstituted 70S ribosomes in vitro. Probably functions indirectly by altering the affinity of the ribosome for aminoacyl-tRNA, thus increasing their reactivity as acceptors for peptidyl transferase. This chain is Elongation factor P, found in Mycobacterium marinum (strain ATCC BAA-535 / M).